Here is a 301-residue protein sequence, read N- to C-terminus: uncharacterized protein (301 aa).

Residue threonine 47 is the Charge relay system of the active site. Tyrosine 136 functions as the Proton donor in the catalytic mechanism. The active-site Schiff-base intermediate with substrate is the lysine 165.

The protein belongs to the DapA family. As to quaternary structure, homotetramer.

It is found in the cytoplasm. This is an uncharacterized protein from Thermofilum pendens (strain DSM 2475 / Hrk 5).